We begin with the raw amino-acid sequence, 455 residues long: Vimentin (455 aa).

The segment at 1-87 is head; it reads MASRTNTSSY…GLADAINTEF (87 aa). The stretch at 87 to 122 forms a coiled coil; sequence FKTNRTNEKAEMQHLNDRFASYIDKVRFLEQQNKIL. The segment at 88 to 122 is coil 1A; sequence KTNRTNEKAEMQHLNDRFASYIDKVRFLEQQNKIL. Positions 94–402 constitute an IF rod domain; that stretch reads EKAEMQHLND…KLLEGEESRI (309 aa). The interval 123 to 144 is linker 1; that stretch reads IAELEQMRGKGSSRVGDLYQDE. Residues 145-236 are a coiled coil; it reads MRELRRQVDQ…KLHDEELAEL (92 aa). The tract at residues 145 to 236 is coil 1B; sequence MRELRRQVDQ…KLHDEELAEL (92 aa). The segment at 237 to 259 is linker 12; the sequence is QIQIQEQHVQIDMEVAKPDLTAA. The tract at residues 260–398 is coil 2; sequence LKDVRQQYET…ATYRKLLEGE (139 aa). The stretch at 294–398 forms a coiled coil; sequence ARNNEAIRLA…ATYRKLLEGE (105 aa). Positions 399-455 are tail; sequence ESRITTPFPNLSSLTLRETMKETRPAMDSLSKKVVIKTIETRDGHIINESSQNDDLE.

Belongs to the intermediate filament family. In terms of assembly, homomer assembled from elementary dimers. In terms of processing, one of the most prominent phosphoproteins in various cells of mesenchymal origin. Phosphorylation is enhanced during cell division, at which time vimentin filaments are significantly reorganized.

The protein localises to the cytoplasm. The protein resides in the cytoskeleton. It localises to the nucleus matrix. Its function is as follows. Vimentins are class-III intermediate filaments found in various non-epithelial cells, especially mesenchymal cells. Vimentin is attached to the nucleus, endoplasmic reticulum, and mitochondria, either laterally or terminally. This chain is Vimentin (vim), found in Cyprinus carpio (Common carp).